A 55-amino-acid polypeptide reads, in one-letter code: MAKGIREKIKLVSSAGTGHFYTTTKNKRTKPEKMELKKYDPVVRQHVIYKEAKIK.

This sequence belongs to the bacterial ribosomal protein bL33 family.

The polypeptide is Large ribosomal subunit protein bL33 (Klebsiella pneumoniae (strain 342)).